The sequence spans 198 residues: Recombination protein RecR (198 aa).

A C4-type zinc finger spans residues 57–72 (CEKCNTFTEAQICEVC). The region spanning 80 to 175 (TLLCVVETPA…AVTRLARGVP (96 aa)) is the Toprim domain.

Belongs to the RecR family.

May play a role in DNA repair. It seems to be involved in an RecBC-independent recombinational process of DNA repair. It may act with RecF and RecO. The chain is Recombination protein RecR from Burkholderia vietnamiensis (strain G4 / LMG 22486) (Burkholderia cepacia (strain R1808)).